The primary structure comprises 255 residues: Thiazole synthase (255 aa).

Lys95 acts as the Schiff-base intermediate with DXP in catalysis. 1-deoxy-D-xylulose 5-phosphate is bound by residues Gly156, 182–183 (AG), and 204–205 (NT).

It belongs to the ThiG family. In terms of assembly, homotetramer. Forms heterodimers with either ThiH or ThiS.

Its subcellular location is the cytoplasm. It catalyses the reaction [ThiS sulfur-carrier protein]-C-terminal-Gly-aminoethanethioate + 2-iminoacetate + 1-deoxy-D-xylulose 5-phosphate = [ThiS sulfur-carrier protein]-C-terminal Gly-Gly + 2-[(2R,5Z)-2-carboxy-4-methylthiazol-5(2H)-ylidene]ethyl phosphate + 2 H2O + H(+). The protein operates within cofactor biosynthesis; thiamine diphosphate biosynthesis. Functionally, catalyzes the rearrangement of 1-deoxy-D-xylulose 5-phosphate (DXP) to produce the thiazole phosphate moiety of thiamine. Sulfur is provided by the thiocarboxylate moiety of the carrier protein ThiS. In vitro, sulfur can be provided by H(2)S. This is Thiazole synthase from Vibrio campbellii (strain ATCC BAA-1116).